Consider the following 423-residue polypeptide: Glucose-1-phosphate adenylyltransferase (423 aa).

Residues Tyr108, Gly173, 188-189 (EK), and Ser207 contribute to the alpha-D-glucose 1-phosphate site.

It belongs to the bacterial/plant glucose-1-phosphate adenylyltransferase family. In terms of assembly, homotetramer.

It catalyses the reaction alpha-D-glucose 1-phosphate + ATP + H(+) = ADP-alpha-D-glucose + diphosphate. Its pathway is glycan biosynthesis; glycogen biosynthesis. Involved in the biosynthesis of ADP-glucose, a building block required for the elongation reactions to produce glycogen. Catalyzes the reaction between ATP and alpha-D-glucose 1-phosphate (G1P) to produce pyrophosphate and ADP-Glc. This Francisella tularensis subsp. holarctica (strain FTNF002-00 / FTA) protein is Glucose-1-phosphate adenylyltransferase.